The primary structure comprises 913 residues: Auxilin (913 aa).

Residue Met-1 is modified to N-acetylmethionine. 3 tandem repeats follow at residues 36–39 (NLKD), 40–43 (NLKD), and 44–47 (TLKD). Positions 36-47 (NLKDNLKDTLKD) are 3 X 4 AA approximate tandem repeats. Positions 55–222 (SVTSYTKGDL…GYMCDLLADK (168 aa)) constitute a Phosphatase tensin-type domain. Ser-112 bears the Phosphoserine mark. Cys-164 functions as the Phosphocysteine intermediate in the catalytic mechanism. The C2 tensin-type domain occupies 228-366 (FKPLTIKSIT…FQVTLDVELQ (139 aa)). The SH3-binding signature appears at 409 to 417 (PIDIPPDNP). The tract at residues 451–776 (QESEQSDDEL…GKGSSNLEGK (326 aa)) is disordered. Ser-453 and Ser-456 each carry phosphoserine. The segment covering 506-523 (AMSNSFSPPAAPPTNSEL) has biased composition (polar residues). Residues 554–572 (ASTQSTPRRSATSTSASPT) are compositionally biased toward low complexity. Residues Ser-563 and Ser-570 each carry the phosphoserine modification. A compositionally biased stretch (polar residues) spans 599 to 629 (FLNTSSASSDPFLQPTRSPSPTVHASSTPAV). Residues 654–669 (SAATSPTGSSHGTPTH) show a composition bias toward low complexity. Positions 849-913 (TKWKPVGMAD…FENQGQKPLY (65 aa)) constitute a J domain.

In terms of assembly, forms a complex composed of HSPA8, CLTC and DNAJC6. Interacts with HSPA8/HSC70 in an ATP-dependent manner; this interaction stimulates the HSPA8's ATPase activity. Interacts with CLTC; this interaction produces a local change in heavy-chain contacts, creating a detectable global distortion of the clathrin coat. Interacts with AP2A2. Interacts with DNM1(GTP-bound form); this interaction allows clathrin-coated vesicle (CCV) formation at the plasma membrane. Post-translationally, phosphorylation at Ser-570 modulates its ability to bind CLTC and therefore the synaptic vesicle endocytosis (SVE). In terms of processing, the N-terminus is blocked. Expressed in various brain regions, including cerebellum, corpus callosum, cortex, striatum, brainstem, pons, putamen, spinal cord and substantia nigra. Very low expression in non-neural tissues such as leukocytes, liver, adipose tissue, skeletal muscle and bone marrow.

It is found in the cytoplasmic vesicle. The protein localises to the clathrin-coated vesicle. May act as a protein phosphatase and/or a lipid phosphatase. Co-chaperone that recruits HSPA8/HSC70 to clathrin-coated vesicles (CCVs) and promotes the ATP-dependent dissociation of clathrin from CCVs and participates in clathrin-mediated endocytosis of synaptic vesicles and their recycling and also in intracellular trafficking. Firstly, binds tightly to the clathrin cages, at a ratio of one DNAJC6 per clathrin triskelion. The HSPA8:ATP complex then binds to the clathrin-auxilin cage, initially at a ratio of one HSPA8 per triskelion leading to ATP hydrolysis stimulation and causing a conformational change in the HSPA8. This cycle is repeated three times to drive to a complex containing the clathrin-auxilin cage associated to three HSPA8:ADP complex. The ATP hydrolysis of the third HSPA8:ATP complex leads to a concerted dismantling of the cage into component triskelia. Then, dissociates from the released triskelia and be recycled to initiate another cycle of HSPA8's recruitment. Also acts during the early steps of clathrin-coated vesicle (CCV) formation through its interaction with the GTP bound form of DNM1. This chain is Auxilin, found in Homo sapiens (Human).